The chain runs to 126 residues: Large ribosomal subunit protein uL22c (126 aa).

It belongs to the universal ribosomal protein uL22 family. Part of the 50S ribosomal subunit.

Its subcellular location is the plastid. It localises to the chloroplast. Its function is as follows. This protein binds specifically to 23S rRNA. The globular domain of the protein is located near the polypeptide exit tunnel on the outside of the subunit, while an extended beta-hairpin is found that lines the wall of the exit tunnel in the center of the 70S ribosome. The polypeptide is Large ribosomal subunit protein uL22c (rpl22) (Cryptomeria japonica (Japanese cedar)).